We begin with the raw amino-acid sequence, 398 residues long: MNGLAVKGPFVLGAALAERELAALLRRRTATDGSVGGRLQVAGRDYLNFSANDYLGLADHSTIKAAFKEGIDCYGTGSGASPLVTGYSRAHQQLEETLADWLGVEAVLLFNCGFSANQAVLKALLGKDHLLWQDRLNHASLQEMGSQLPCKMKRFGHNDMTALERQLEPNRGLIVSEGVFSMDGDQGPWPELARLAAQSGNWLMIDDAHGLGVLGPEGRGTLAAQGVAPASVHIQMGTFGKALGVAGAFVGGSRELVDYLVNFARHYVYSTHMPTAQACAVSKSIELVRAADESRAHLARLITRFRQGTAALGWQLGASDTPIQPLLVGESSAALQLAARLRDRGVWVSAIRPPTVPVGTARLRITLSAAHREQDVDRLLKALGPCSGSASWEGIHHG.

Arg-26 provides a ligand contact to substrate. 113–114 serves as a coordination point for pyridoxal 5'-phosphate; sequence GF. His-138 serves as a coordination point for substrate. Pyridoxal 5'-phosphate contacts are provided by Ser-181, His-209, and Thr-238. Lys-241 carries the post-translational modification N6-(pyridoxal phosphate)lysine. A substrate-binding site is contributed by Thr-355.

This sequence belongs to the class-II pyridoxal-phosphate-dependent aminotransferase family. BioF subfamily. In terms of assembly, homodimer. It depends on pyridoxal 5'-phosphate as a cofactor.

The enzyme catalyses 6-carboxyhexanoyl-[ACP] + L-alanine + H(+) = (8S)-8-amino-7-oxononanoate + holo-[ACP] + CO2. Its pathway is cofactor biosynthesis; biotin biosynthesis. Functionally, catalyzes the decarboxylative condensation of pimeloyl-[acyl-carrier protein] and L-alanine to produce 8-amino-7-oxononanoate (AON), [acyl-carrier protein], and carbon dioxide. In Aeromonas salmonicida (strain A449), this protein is 8-amino-7-oxononanoate synthase.